The primary structure comprises 945 residues: Poly [ADP-ribose] polymerase 1 (945 aa).

The PARP-type 1 zinc-finger motif lies at 10 to 96 (YAIEYAKSGR…KLRQEIQHFK (87 aa)). Zn(2+) contacts are provided by Cys22, Cys25, His54, and Cys57. A PARP-type 2; degenerate zinc finger spans residues 117 to 183 (IKTEKSLSNR…DYEENFKIKA (67 aa)). The disordered stretch occupies residues 195–251 (RRSTEPATPASASPTPPEAETPVLSAEGSPESSNKRPASSEIIEIDGEGNPDENDFA). Positions 237-248 (IEIDGEGNPDEN) are enriched in acidic residues. In terms of domain architecture, PADR1 zinc-binding spans 258–397 (KEARLMEVQK…NQMSERLYIG (140 aa)). The segment at 324–369 (GCPIICQTCSNGKIVYNSSCRTYVCTGYATEYSKCTYESKNPIRTP) is zinc ribbon. Zn(2+) is bound by residues Cys329, Cys332, Cys348, and Cys358. Residues 464–563 (RCHVFKNEID…KHFRKMPGMF (100 aa)) form the WGR domain. The PARP alpha-helical domain occupies 586–704 (KTLLPKSVKE…DIKFAYDQIS (119 aa)). Residues 717 to 945 (DPVDINYQKL…RVKMHHARHL (229 aa)) enclose the PARP catalytic domain.

Belongs to the ARTD/PARP family.

The protein localises to the nucleus. The enzyme catalyses NAD(+) + (ADP-D-ribosyl)n-acceptor = nicotinamide + (ADP-D-ribosyl)n+1-acceptor + H(+).. The catalysed reaction is L-aspartyl-[protein] + NAD(+) = 4-O-(ADP-D-ribosyl)-L-aspartyl-[protein] + nicotinamide. It carries out the reaction L-glutamyl-[protein] + NAD(+) = 5-O-(ADP-D-ribosyl)-L-glutamyl-[protein] + nicotinamide. Its activity is regulated as follows. Inhibited by N-(6-oxo-5,6-dihydrophenanthridin-2-yl)-N,N-dimethylacetamide HCl (PJ34), 1,5-dihydroxyisoquinoline (DHQ) and 3-aminobenzamide (3AB). Its function is as follows. Poly[ADP-ribose] polymerase modifies various nuclear proteins by poly(ADP-ribosyl)ation, a post-translational modification synthesized after DNA damage that appears as an obligatory step in a detection/signaling pathway leading to the reparation of DNA strand breaks and programmed cell death. Involved in protection of the genome against mutations. The chain is Poly [ADP-ribose] polymerase 1 from Caenorhabditis elegans.